The chain runs to 3177 residues: MEEKNVNLKTGDLVTFFSEQEEEDGYFSKSHDSAVMSNNKSKDCVFKVYPFTQYTARKALKKKAKRKLQQQQADGADANNTNSSSGGGNSNNNNNNNSNSSNNNNSSNNNNNNNNNGTTNANGENVNNEVTDLELKQLEEYQDLEDVSNESTLIQLEGRDLVYGQIVQLYQPSSNQFLFARNNIVGFRQDGSQKCYFKITPRFQNQDGCKVFSEDLVLLRHEKTGLFLNQQNFIIDQGVFGIGLSENGTFWKMAVSDVDGKSGLNILKANEPFRLFHREGGFVKVSNDKTTFTYNTKTPSSINSLFEIEFENNNLISPLLRSQKDLQLQQKDNTDQLQQQQQKDKDKDNPLKQSYGSLSNSNILLQNNNNNNNNNNSNNNNNSNNNSNNSNGNNSNGNNNNNNSNNIFTSNEVHIGQSFWIRLVGTKKYLSLKESSDDSLKDNPLIVVTEDQKYSPSATFSFVKRDKANEDVIFGSFVRIQSLSKQYLHFISDETFHHNGELVGSKKYYKNDDFQIKQIPKSQLEDYGFVLSRINKIQNYLYQSSSNSSSSLMSSINGIGQSSFSSLAGATTTTTNSGGSNNINNNNNNNNNNNNNNNNNNNNNNNNNIDKKRATVQEIKAIIVEFIKFCTQSEVEDPLDREGTPIKTHQKLLSHPSHLSVLLDYLKRLFEPFDPASILFVYRLLKQMAKSNIKNGIIINEHLDQISPPSIRDKTIPLHFGAILYEVYKNNNILLEALTEDKVQEFINVIKQKKEPKYMELLSEICICYGKPIVKNQQYLCDLLLEKNSNLLFKTRVIGGSLEIERQNPAPKWVDITAFALSVDEKTHRYFEQSLALYSNVSKGRNYNGIRLVGQRITHKECLLALKEESLPYSLRGCYINILIHVYMDCHPQHYVPQINYVWNPSIVNNTKTIELLQLYQQYNITGSLHQRNSSIQNPYSTVSNGNISISSNNPISTTNTTTGSGGGGGGSGFMPTVGPSYGQASSPLSNGAIVNSLASTNLNNQTPTSLNLFNLNSPNNTTTTTNNSTNNTTNNNTNNNNNNNNTNSLITSTTHLIQLVSPQQNNNSNNNNNNNILNSIPTSPIVGSTNHGQLSHSGSNQTPLYQQQQQQQQQQQQQNSLSLFREDDIFSTFVNLEIQADKEPSTTTQLLISLLSKSEYFSNFNNGFPTSHRPQLAFFHKILIAVGYAFKFGFFRKKERVLLKRLRYILEFEHEPVNTFKEVDLGRTMGGSRMLEDESVIYVSIKIEIVNILHLMLSFQKKNIMDVFLYDFSNMSQSAFSQPENVKNQLIDRLTTNYQRDGHQDLSLCTVLFKLLKHENNQLSSLSLSLLNRIYKYRSIYAMLWSPIQKLFLLPNELTPTYKESLQKMESLTVTCFAPLTDDSTQESLRSLAFFIHLVTDSDPIKLVKNQKLLHVIGVHKTIIGVLKIGCSLDDLILDQSQPQHSQQQQQQHQQQPINISGSIDESSSTIPPLTTTTTTTTTTTTTTTTTQQSINFKSLLNSKTNSQSIHVAKIFRSCYEFLKVFCRDNRENQKVLFGEIEFLIGHLIRYGNVFGTVETLIEVFKNNIELAINFGNSPYLKLLVKFIINLSIDQLDPMFLRLLSVLILPCNENSVIENQISVTNLFKEYKSKISKLLVPISTMKEVMKDPKLLSKHYNVNSSNVYKLHLALQEILNHSLNDDGAGIGIGTTVIGGSIIGGSITTTAQTNINTITNTPTNNNSNNSNNNNTTNNNGTISHRHSNSTNTTQSVYPRLIRSSAKAQIVNSSVEILPKEFVINLELILLLKACSHGINTPTEVICREFLSMGECFDILIVRSDGNGKENSSLMINETKEYLENNLLFRFKSAYLSFLHEVFFNSDTLKGDLLALQLNHDLWSLIDQFTNQLNHLVTICAMNQMGQLYYVQMARNIIIPMVSVLERFYSQCFYFDKATQIHLTYSGRLMASLMKLYWKDPSLTIPFNQQNTSRYQSSLNMSPTNYDDSDTSEGGYHPILQGLDPEERVNIYSNLVKCLKAMDRSALSPIVPASVSTINISNVIKGCEDVINRTEHPNSRNRTETIDSSNSSPPLILSKSSSIYIDFTRLNNFVKLSKIRGYTEIAMMVNQSLSITPFIISHPNYNSNNSNNGNNNNNNNNGGGGNGNGGTIRSNSYISGGGGGSTTKRRTSRNNSNISDISNSGKGGSTISNRFQNSFSNTFIQQQQIGITNQRHINSGNTNIVTTVTSKSTNFLEILVFQLRNSLYDNDEMKINCIRILSSLLYINKERKPDIQNIMTDLYCHSAVIGLLSSKNIEIQFESLSLLLALLDDSVNVDNPLPNPKVKDDIQSHFSSSPDIQFFRDIYAMIERAKINLRDTKRNIHRIEHVKMGNNTVLGGNLTSKNSIKSSINNGNNSNNNNNRNGRVIDGCETNPYSTEFQLLQNIFRVLQLLCQGTTNIFKKSIRSQPDNYKSYDILKEMCQFLKILETIVNIDSDSIELGLRFFACMKEIVKNTPENQIAVTNVQVCKAVCNILKKTKENDPSKELKELKYLDLKIEVVDFLLHVIDKEDPRVMSKLIPELDYKVIESNTQVISQRSNHETNEKSIKLASMTFRLIKILADNDKSHNIQLEDCLLKCGEHCKSRIGRVELLYQNKLERIYFPIPNYSRRLILEDKEQSKIKNDENLLQENLEEHFINNKISWNKATEKIDAFMDYSEYKLIELEHLHNLKLNSMSYYLVSHTDKFKFLSFFLALIINLLLIIYSINSPPDLKQFKSDISDDYGIASWWAGFLPLTILQTICCILACVGFFLRKGPVLLYQNWVNYLKTHGHKKNFMFYTNDQRMHSLRQTFKYKFIPLNAKFLMTDLKAVYNILAVICSVLGIIYSPYFFAFHIFQFSLNTKALSLVLKAITMNKKTLLVMGVFILQAIYLLSIFSFVWFQEHYKDDDSEYMCGSLLQCFITNLYYGVPSQGQLIQFIKYNFPNNYLNTTDSTGSPTLEPIKTSNTVSARIIGWTVFNVAFYVVISLILLNVILGIIVDTFGQLRDQRAETEDYKSNVCFICSIERETFQKNSIEFKKHIEDDHNKWHYLYFFAYLKERCTNNQMNQLSELECSIADGITNRSYISFFPIEMSMSLQGIENANRKKEESIDQHAKLLDDVEKKITHNISTQFNQSISLLIDEIKNLRQQVSDLKQQQK.

At 1–1175 (MEEKNVNLKT…NNGFPTSHRP (1175 aa)) the chain is on the cytoplasmic side. The tract at residues 62 to 125 (KKAKRKLQQQ…NGTTNANGEN (64 aa)) is disordered. Residues 79–125 (NNTNSSSGGGNSNNNNNNNSNSSNNNNSSNNNNNNNNNGTTNANGEN) show a composition bias toward low complexity. 1D-myo-inositol 1,4,5-trisphosphate is bound at residue 289-293 (KTTFT). Low complexity-rich tracts occupy residues 329–341 (QQKD…QQQQ), 351–405 (LKQS…NNSN), and 570–608 (ATTT…NNNN). Disordered regions lie at residues 329–405 (QQKD…NNSN) and 570–609 (ATTT…NNNI). 1D-myo-inositol 1,4,5-trisphosphate is bound by residues 608–611 (NIDK) and 692–694 (NIK). The segment covering 947–963 (NISISSNNPISTTNTTT) has biased composition (low complexity). Disordered regions lie at residues 947–983 (NISI…PSYG), 1009–1049 (TSLN…NTNS), and 1063–1121 (PQQN…QQNS). Over residues 964–973 (GSGGGGGGSG) the composition is skewed to gly residues. Over residues 1066-1081 (NNNSNNNNNNNILNSI) the composition is skewed to low complexity. Residues 1082 to 1106 (PTSPIVGSTNHGQLSHSGSNQTPLY) are compositionally biased toward polar residues. The span at 1107 to 1119 (QQQQQQQQQQQQQ) shows a compositional bias: low complexity. Residues 1176 to 1196 (QLAFFHKILIAVGYAFKFGFF) form a helical membrane-spanning segment. Topologically, residues 1197–2723 (RKKERVLLKR…SYYLVSHTDK (1527 aa)) are lumenal. Residue N1275 is glycosylated (N-linked (GlcNAc...) asparagine). Positions 1443 to 1458 (QPQHSQQQQQQHQQQP) are enriched in low complexity. Positions 1443–1490 (QPQHSQQQQQQHQQQPINISGSIDESSSTIPPLTTTTTTTTTTTTTTT) are disordered. Residues 1459 to 1475 (INISGSIDESSSTIPPL) are compositionally biased toward polar residues. N1460 carries an N-linked (GlcNAc...) asparagine glycan. The segment covering 1476–1490 (TTTTTTTTTTTTTTT) has biased composition (low complexity). N-linked (GlcNAc...) asparagine glycans are attached at residues N1591, N1662, N1678, N1722, N1725, N1730, N1731, N1736, N1745, N1748, N1768, N1827, N1833, N1967, N2035, N2048, N2057, N2106, and N2124. Residues 1715 to 1739 (ITNTPTNNNSNNSNNNNTTNNNGTI) are compositionally biased toward low complexity. The tract at residues 1715–1751 (ITNTPTNNNSNNSNNNNTTNNNGTISHRHSNSTNTTQ) is disordered. Residues 2050–2061 (TEHPNSRNRTET) are compositionally biased toward basic and acidic residues. A disordered region spans residues 2050–2069 (TEHPNSRNRTETIDSSNSSP). Residues 2125–2136 (NSNNGNNNNNNN) show a composition bias toward low complexity. The interval 2125–2188 (NSNNGNNNNN…NSGKGGSTIS (64 aa)) is disordered. Over residues 2137 to 2146 (NGGGGNGNGG) the composition is skewed to gly residues. A compositionally biased stretch (low complexity) spans 2169-2180 (RNNSNISDISNS). N-linked (GlcNAc...) asparagine glycans are attached at residues N2170, N2173, N2370, N2377, N2392, and N2644. The helical transmembrane segment at 2724–2744 (FKFLSFFLALIINLLLIIYSI) threads the bilayer. At 2745 to 2769 (NSPPDLKQFKSDISDDYGIASWWAG) the chain is on the cytoplasmic side. A helical transmembrane segment spans residues 2770–2790 (FLPLTILQTICCILACVGFFL). Residues 2791 to 2853 (RKGPVLLYQN…TDLKAVYNIL (63 aa)) are Lumenal-facing. Residues 2854–2874 (AVICSVLGIIYSPYFFAFHIF) form a helical membrane-spanning segment. The Cytoplasmic segment spans residues 2875 to 2896 (QFSLNTKALSLVLKAITMNKKT). The chain crosses the membrane as a helical span at residues 2897 to 2917 (LLVMGVFILQAIYLLSIFSFV). The Lumenal segment spans residues 2918–2995 (WFQEHYKDDD…VSARIIGWTV (78 aa)). N2967 carries N-linked (GlcNAc...) asparagine glycosylation. The chain crosses the membrane as a helical span at residues 2996–3016 (FNVAFYVVISLILLNVILGII). The Cytoplasmic segment spans residues 3017-3177 (VDTFGQLRDQ…QVSDLKQQQK (161 aa)). Residues 3118 to 3177 (IENANRKKEESIDQHAKLLDDVEKKITHNISTQFNQSISLLIDEIKNLRQQVSDLKQQQK) are a coiled coil.

Belongs to the InsP3 receptor family.

Its subcellular location is the endoplasmic reticulum membrane. May be a receptor for inositol 1,4,5 trisphosphate which governs calcium fluxes from the endoplasmic reticulum stores into the cytosol. May be involved in autophagic cell death. The chain is Inositol 1,4,5-trisphosphate receptor-like protein A (iplA) from Dictyostelium discoideum (Social amoeba).